Consider the following 86-residue polypeptide: MNVKTKNTIPADQYLKDMYMMAVPREATRLMTIPQYINCFGKIRQSVRPKTENTRAIMHTKTSRMAALVFSVPVFTPSYIPEPVLL.

This is an uncharacterized protein from Saccharomyces cerevisiae (strain ATCC 204508 / S288c) (Baker's yeast).